Reading from the N-terminus, the 526-residue chain is Amine oxidase [flavin-containing] A (526 aa).

The residue at position 1 (Met-1) is an N-acetylmethionine. At 1–497 (MTDLEKPNLA…HTFLERNLPS (497 aa)) the chain is on the cytoplasmic side. A Phosphoserine modification is found at Ser-383. The residue at position 406 (Cys-406) is an S-8alpha-FAD cysteine. A helical; Anchor for type IV membrane protein membrane pass occupies residues 498-518 (VPGLLKITGVSTSVALLCFVL). Topologically, residues 519–526 (YKIKKLPC) are mitochondrial intermembrane. An interaction with membrane phospholipid headgroups region spans residues 520–522 (KIK).

It belongs to the flavin monoamine oxidase family. As to quaternary structure, monomer, homo- or heterodimer (containing two subunits of similar size). Each subunit contains a covalently bound flavin. Enzymatically active as monomer. Requires FAD as cofactor.

The protein resides in the mitochondrion outer membrane. It carries out the reaction a secondary aliphatic amine + O2 + H2O = a primary amine + an aldehyde + H2O2. The enzyme catalyses a primary methyl amine + O2 + H2O = an aldehyde + H2O2 + NH4(+). It catalyses the reaction (R)-adrenaline + O2 + H2O = (R)-3,4-dihydroxymandelaldehyde + methylamine + H2O2. The catalysed reaction is dopamine + O2 + H2O = 3,4-dihydroxyphenylacetaldehyde + H2O2 + NH4(+). It carries out the reaction tyramine + O2 + H2O = (4-hydroxyphenyl)acetaldehyde + H2O2 + NH4(+). The enzyme catalyses (R)-noradrenaline + O2 + H2O = (R)-3,4-dihydroxymandelaldehyde + H2O2 + NH4(+). It catalyses the reaction serotonin + O2 + H2O = (5-hydroxyindol-3-yl)acetaldehyde + H2O2 + NH4(+). The catalysed reaction is kynuramine + O2 + H2O = 3-(2-aminophenyl)-3-oxopropanal + H2O2 + NH4(+). It carries out the reaction tryptamine + O2 + H2O = indole-3-acetaldehyde + H2O2 + NH4(+). The enzyme catalyses 2-phenylethylamine + O2 + H2O = 2-phenylacetaldehyde + H2O2 + NH4(+). Catalyzes the oxidative deamination of primary and some secondary amine such as neurotransmitters, with concomitant reduction of oxygen to hydrogen peroxide and has important functions in the metabolism of neuroactive and vasoactive amines in the central nervous system and peripheral tissues. Preferentially oxidizes serotonin. Also catalyzes the oxidative deamination of kynuramine to 3-(2-aminophenyl)-3-oxopropanal that can spontaneously condense to 4-hydroxyquinoline. The sequence is that of Amine oxidase [flavin-containing] A from Rattus norvegicus (Rat).